The sequence spans 157 residues: Small ribosomal subunit protein uS7 (157 aa).

The protein belongs to the universal ribosomal protein uS7 family. In terms of assembly, part of the 30S ribosomal subunit. Contacts proteins S9 and S11.

In terms of biological role, one of the primary rRNA binding proteins, it binds directly to 16S rRNA where it nucleates assembly of the head domain of the 30S subunit. Is located at the subunit interface close to the decoding center, probably blocks exit of the E-site tRNA. In Chloroflexus aurantiacus (strain ATCC 29366 / DSM 635 / J-10-fl), this protein is Small ribosomal subunit protein uS7.